The sequence spans 147 residues: UPF0310 protein in gntR 5'region (147 aa).

This sequence belongs to the UPF0310 family.

The polypeptide is UPF0310 protein in gntR 5'region (oug) (Bacillus licheniformis).